The primary structure comprises 311 residues: Pantothenate kinase (311 aa).

93–100 contacts ATP; it reads GSVAVGKS.

Belongs to the prokaryotic pantothenate kinase family.

It localises to the cytoplasm. The enzyme catalyses (R)-pantothenate + ATP = (R)-4'-phosphopantothenate + ADP + H(+). The protein operates within cofactor biosynthesis; coenzyme A biosynthesis; CoA from (R)-pantothenate: step 1/5. The protein is Pantothenate kinase (coaA) of Haemophilus influenzae (strain ATCC 51907 / DSM 11121 / KW20 / Rd).